Reading from the N-terminus, the 143-residue chain is UPF0179 protein PTO0851 (143 aa).

It belongs to the UPF0179 family.

In Picrophilus torridus (strain ATCC 700027 / DSM 9790 / JCM 10055 / NBRC 100828 / KAW 2/3), this protein is UPF0179 protein PTO0851.